Here is a 414-residue protein sequence, read N- to C-terminus: Enterobactin exporter EntS (414 aa).

Residues 1–21 are Cytoplasmic-facing; it reads MNRQSWLLNLSLLKTHPAFRA. The chain crosses the membrane as a helical span at residues 22–42; that stretch reads VFLARFISIVSLGLLGVAVPV. Residues 43-55 lie on the Periplasmic side of the membrane; sequence QIQMMTHSTWQVG. The chain crosses the membrane as a helical span at residues 56–76; that stretch reads LSVTLTGGAMFIGLMVGGVLA. At 77-83 the chain is on the cytoplasmic side; that stretch reads DRYERKK. The helical transmembrane segment at 84 to 104 threads the bilayer; that stretch reads VILLARGTCGIGFIGLCVNAL. Residues 105-109 lie on the Periplasmic side of the membrane; it reads LPEPS. Residues 110–130 traverse the membrane as a helical segment; sequence LLAIYLLGLWDGFFASLGVTA. Residues 131–156 are Cytoplasmic-facing; that stretch reads LLAATPALVGRENLMQAGAITMLTVR. Residues 157 to 177 traverse the membrane as a helical segment; sequence LGSVISPMLGGILLASGGVAW. N178 is a topological domain (periplasmic). Residues 179 to 199 traverse the membrane as a helical segment; the sequence is YGLAAAGTFITLLPLLTLPRL. The Cytoplasmic segment spans residues 200 to 218; that stretch reads PVPPQPRENPFIALLAAFR. The chain crosses the membrane as a helical span at residues 219–239; the sequence is FLLASPLIGGIALLGGLVTMA. At 240-256 the chain is on the periplasmic side; sequence SAVRVLYPALAMSWQMS. A helical transmembrane segment spans residues 257-277; it reads AAQIGLLYAAIPLGAAIGALT. At 278–287 the chain is on the cytoplasmic side; the sequence is SGQLAHSVRP. A helical transmembrane segment spans residues 288–307; the sequence is GLIMLVSTVGSFLAVGLFAI. The Periplasmic portion of the chain corresponds to 308-313; that stretch reads MPVWIA. Residues 314–336 form a helical membrane-spanning segment; that stretch reads GVICLALFGWLSAISSLLQYTLL. At 337–356 the chain is on the cytoplasmic side; it reads QTQTPENMLGRMNGLWTAQN. The helical transmembrane segment at 357–377 threads the bilayer; it reads VTGDAIGAALLGGLGAMMTPV. A378 is a topological domain (periplasmic). The helical transmembrane segment at 379 to 399 threads the bilayer; the sequence is SASVSGFGLVIIGLLLLLVLG. Residues 400–414 are Cytoplasmic-facing; sequence ELRRFRQTPPVSDAG.

This sequence belongs to the major facilitator superfamily. EntS (TC 2.A.1.38) family.

The protein resides in the cell inner membrane. Component of an export pathway for enterobactin. The chain is Enterobactin exporter EntS from Salmonella typhimurium (strain LT2 / SGSC1412 / ATCC 700720).